The following is a 769-amino-acid chain: Probable protease Ga0334635_1659 (769 aa).

Residues 118–167 (VARGSSDNNGAPPLSFTLSHGDPKSDPEPSSPSRLVNTGLSEAERPESPL) are disordered.

In terms of biological role, probably a dedicated protease for substrate gasdermin bGSDM; cleaves the bGSDM precursor, releasing the pore-forming moiety, which integrates into the membrane and triggers cell death. Involved in defense against bacteriophages. Expression of gasdermin bGSDM and this neighboring protease is toxic in E.coli. The protein is Probable protease Ga0334635_1659 of Vitiosangium sp. (strain GDMCC 1.1324).